Reading from the N-terminus, the 153-residue chain is Large ribosomal subunit protein uL15 (153 aa).

The segment at 1 to 47 (MRLHELSPAPGSRKDRKRVGRGDAGRGNYSGRGMKGQKARSGGATRP) is disordered.

This sequence belongs to the universal ribosomal protein uL15 family. Part of the 50S ribosomal subunit.

Binds to the 23S rRNA. This chain is Large ribosomal subunit protein uL15, found in Dehalococcoides mccartyi (strain ATCC BAA-2100 / JCM 16839 / KCTC 5957 / BAV1).